Reading from the N-terminus, the 774-residue chain is Glycophorin-binding protein 130 (774 aa).

A PEXEL motif motif is present at residues 84-88 (RILAE). 10 disordered regions span residues 97–243 (EKTT…AADP), 256–291 (LTNTDPNDEVERRNADNKEDLTSADPEGQIMREYAS), 310–334 (DPNDDVERRNADNKEDLTSADPEGQ), 358–383 (NTDPNDEVERRNADNKEDLTSADPEG), 410–434 (DPNDEVERRNADNKEDLTSADPEGQ), 458–481 (NTDPNDEVERRNADNKELTSSDPE), 509–533 (DPNDEVERRNADNKEDLTSADPEGQ), 609–632 (DPNDEVERRNADNKEDLTSADPEG), 661–682 (NDEVERRNADNKEDLTSADPEG), and 709–734 (DPNDDVERRNADNKEDLTSADPEGQI). 2 stretches are compositionally biased toward basic and acidic residues: residues 117-140 (TKKDEENKSVVTEEQKVESDSEKQ) and 174-198 (KKEESGKPEENKHANEASKKKEPKA). The span at 201–228 (VSQKPSTSTRSNNEVKIRAASNQETLTS) shows a compositional bias: polar residues. 11 GBP repeats span residues 226-275 (LTSA…NKED), 276-325 (LTSA…NKED), 326-375 (LTSA…NKED), 376-425 (LTSA…NKED), 426-474 (LTSA…DNKE), 475-524 (LTSS…NKED), 525-574 (LTSA…NKEE), 575-624 (LTSS…NKED), 625-674 (LTSA…NKED), 675-724 (LTSA…NKED), and 725-774 (LTSA…NNEA). Composition is skewed to basic and acidic residues over residues 264-276 (EVERRNADNKEDL), 314-326 (DVERRNADNKEDL), 364-376 (EVERRNADNKEDL), 414-426 (EVERRNADNKEDL), 464-476 (EVERRNADNKELT), 513-525 (EVERRNADNKEDL), 613-625 (EVERRNADNKEDL), 663-675 (EVERRNADNKEDL), and 713-725 (DVERRNADNKEDL).

As to quaternary structure, interacts with host glycophorin.

The protein localises to the secreted. It is found in the cell surface. Its subcellular location is the host cytoplasm. Functionally, involved in merozoite invasion of host erythrocytes. The polypeptide is Glycophorin-binding protein 130 (Plasmodium falciparum (isolate FCR-3 / Gambia)).